Here is a 430-residue protein sequence, read N- to C-terminus: Asparagine--tRNA ligase (430 aa).

Belongs to the class-II aminoacyl-tRNA synthetase family. Homodimer.

The protein resides in the cytoplasm. It catalyses the reaction tRNA(Asn) + L-asparagine + ATP = L-asparaginyl-tRNA(Asn) + AMP + diphosphate + H(+). The sequence is that of Asparagine--tRNA ligase from Staphylococcus aureus (strain JH1).